We begin with the raw amino-acid sequence, 500 residues long: L-arabinose isomerase (500 aa).

Mn(2+) is bound by residues Glu306, Glu333, His350, and His450.

It belongs to the arabinose isomerase family. Homohexamer. Mn(2+) is required as a cofactor.

It carries out the reaction beta-L-arabinopyranose = L-ribulose. Its pathway is carbohydrate degradation; L-arabinose degradation via L-ribulose; D-xylulose 5-phosphate from L-arabinose (bacterial route): step 1/3. Its function is as follows. Catalyzes the conversion of L-arabinose to L-ribulose. This Shigella flexneri protein is L-arabinose isomerase.